A 354-amino-acid polypeptide reads, in one-letter code: S-adenosylmethionine:tRNA ribosyltransferase-isomerase (354 aa).

It belongs to the QueA family. As to quaternary structure, monomer.

Its subcellular location is the cytoplasm. The enzyme catalyses 7-aminomethyl-7-carbaguanosine(34) in tRNA + S-adenosyl-L-methionine = epoxyqueuosine(34) in tRNA + adenine + L-methionine + 2 H(+). The protein operates within tRNA modification; tRNA-queuosine biosynthesis. Its function is as follows. Transfers and isomerizes the ribose moiety from AdoMet to the 7-aminomethyl group of 7-deazaguanine (preQ1-tRNA) to give epoxyqueuosine (oQ-tRNA). The chain is S-adenosylmethionine:tRNA ribosyltransferase-isomerase from Salmonella paratyphi C (strain RKS4594).